We begin with the raw amino-acid sequence, 1002 residues long: yemanuclein (1002 aa).

A Nuclear localization signal motif is present at residues 80–85 (KKKTKK). Disordered regions lie at residues 193–358 (AIIK…KKVV), 395–428 (VSTD…GQEN), and 642–725 (KLKA…AKQV). A compositionally biased stretch (low complexity) spans 207–217 (SSSSESSSSSS). The span at 218–262 (GDDDENDDGNNEEDDESDSEDDSEENDESDSEDDSESESLEDEDS) shows a compositional bias: acidic residues. A run of 2 repeats spans residues 230 to 241 (EDDESDSEDDSE) and 242 to 253 (ENDESDSEDDSE). Residues 230–253 (EDDESDSEDDSEENDESDSEDDSE) form a 2 X 12 AA tandem repeats region. Low complexity-rich tracts occupy residues 286-320 (TGKS…RPST), 336-358 (QPSS…KKVV), and 395-404 (VSTDVSSSDS). A compositionally biased stretch (basic and acidic residues) spans 408-427 (ESEHGRADRQAGQHGKDGQE). Over residues 653–667 (PASASPKPVGVVSAP) the composition is skewed to low complexity. Basic and acidic residues predominate over residues 679–689 (AVEDPRSRGNS). Phosphoserine is present on residues Ser685 and Ser689. Residues 690–701 (DTDSATSASSNS) show a composition bias toward low complexity. A phosphoserine mark is found at Ser885, Ser886, and Ser887. Residues 901-928 (SKPQKKVQSKPKNKTQNRGRSSLGAVGQ) form a disordered region. The segment covering 903-917 (PQKKVQSKPKNKTQN) has biased composition (basic residues).

Post-translationally, the N-terminus is blocked. As to expression, oocyte specific.

The protein resides in the nucleus. Its subcellular location is the nucleoplasm. The protein localises to the chromosome. It is found in the centromere. It localises to the kinetochore. In terms of biological role, may play a key role in egg organization. May be a transcriptional regulator having a role in chromatin remodeling in concert with Hira, a histone chaperone. Involved in chromosome segregation by affecting kinetochores function in the first meiotic division. This Drosophila melanogaster (Fruit fly) protein is yemanuclein.